Here is a 122-residue protein sequence, read N- to C-terminus: MARIAGVNIPTAKRVVIALTYIHGIGPKFAQEIVEKVGIPAERRVHQLTDAEVLQIREAIDRDYQVEGDLRRETAMNIKRLMDLGCYRGLRHRRGLPVRGQRTHTNARTRKGPAKAIAGKKK.

Residues 99–122 are disordered; sequence RGQRTHTNARTRKGPAKAIAGKKK.

The protein belongs to the universal ribosomal protein uS13 family. As to quaternary structure, part of the 30S ribosomal subunit. Forms a loose heterodimer with protein S19. Forms two bridges to the 50S subunit in the 70S ribosome.

Its function is as follows. Located at the top of the head of the 30S subunit, it contacts several helices of the 16S rRNA. In the 70S ribosome it contacts the 23S rRNA (bridge B1a) and protein L5 of the 50S subunit (bridge B1b), connecting the 2 subunits; these bridges are implicated in subunit movement. Contacts the tRNAs in the A and P-sites. This chain is Small ribosomal subunit protein uS13, found in Rhizobium etli (strain CIAT 652).